The chain runs to 286 residues: uncharacterized protein (286 aa).

A signal peptide (tat-type signal) is located at residues 1-31 (MKKMSRRQFLKGMFGALAAGALTAGGGYGYA). Positions 65, 67, 97, 130, 221, and 223 each coordinate a divalent metal cation.

Belongs to the metallophosphoesterase superfamily. It depends on a divalent metal cation as a cofactor. Post-translationally, predicted to be exported by the Tat system. The position of the signal peptide cleavage has not been experimentally proven.

This is an uncharacterized protein from Bacillus subtilis (strain 168).